The sequence spans 692 residues: SH3 domain-containing protein 21 (692 aa).

Residues 1 to 60 (MVQSELQLQPRAGGRAEAASWGDRGNDKGGFGNPDMPSVSPGPQRPPKLSSLAYDSPPDY) form a disordered region. Residues 65 to 126 (SHPEAYRVLF…PDNFVLPPPP (62 aa)) form the SH3 domain. 3 disordered regions span residues 132–501 (PRKV…EVLP), 536–605 (PKGG…SQET), and 672–692 (VMQGTQKSQTPRIIHAQTQTY). Residues 177-186 (PSRDSQKLTS) are compositionally biased toward basic and acidic residues. The segment covering 210-220 (TQTPQQRSVSS) has biased composition (polar residues). Composition is skewed to basic and acidic residues over residues 378–396 (VSTRDDTQFHHFSSEEALQ), 490–501 (NEERLLRGEVLP), and 542–582 (SKEE…KEEV). A coiled-coil region spans residues 628–678 (SLRGEVESLRRALELMGVQLERKLTDIWEELKSEKEQRQRLEVQVMQGTQK). A compositionally biased stretch (polar residues) spans 673–692 (MQGTQKSQTPRIIHAQTQTY).

In Macaca fascicularis (Crab-eating macaque), this protein is SH3 domain-containing protein 21 (SH3D21).